The following is a 143-amino-acid chain: Small ribosomal subunit protein uS12 (143 aa).

The segment covering 1 to 20 has biased composition (basic residues); that stretch reads MGKPRGLRTARKHRSHRRDQ. Residues 1–26 are disordered; it reads MGKPRGLRTARKHRSHRRDQRWHDKD. A Hydroxyproline modification is found at Pro-62.

The protein belongs to the universal ribosomal protein uS12 family. In terms of assembly, component of the 40S small ribosomal subunit.

It is found in the cytoplasm. It localises to the cytosol. Its subcellular location is the rough endoplasmic reticulum. The chain is Small ribosomal subunit protein uS12 (RpS23) from Dermacentor variabilis (American dog tick).